The sequence spans 206 residues: Large ribosomal subunit protein uL4 (206 aa).

The interval 63 to 97 (MYKQKGTGRARHHSARAPQFRGGGKAHGPVVRSHE) is disordered. The segment covering 64-77 (YKQKGTGRARHHSA) has biased composition (basic residues).

The protein belongs to the universal ribosomal protein uL4 family. Part of the 50S ribosomal subunit.

Functionally, one of the primary rRNA binding proteins, this protein initially binds near the 5'-end of the 23S rRNA. It is important during the early stages of 50S assembly. It makes multiple contacts with different domains of the 23S rRNA in the assembled 50S subunit and ribosome. Forms part of the polypeptide exit tunnel. This chain is Large ribosomal subunit protein uL4, found in Rhizobium rhizogenes (strain K84 / ATCC BAA-868) (Agrobacterium radiobacter).